The following is a 278-amino-acid chain: SPX domain-containing protein 2 (278 aa).

Residues 1-162 (MKFGKSLSSQ…GSMIRLPFVQ (162 aa)) form the SPX domain. Disordered stretches follow at residues 191–242 (PTNE…KSTV) and 255–278 (GSSTVSVFSLPPLHGSNGQDEPGR).

In terms of assembly, interacts (via SPX domain) with PHR2 (via C-terminus). Interacts with RLI1 in the nucleus to prevents its positive regulation of leaf inclination during phosphate (Pi) starvation.

Its subcellular location is the nucleus. Inhibits PHR2 DNA-binding activity via a phosphate (Pi)-dependent protein interaction. Together with SPX1, plays a negative role in the regulation of leaf inclination by preventing RLI1 transcription factor activity in Pi depleted conditions. The polypeptide is SPX domain-containing protein 2 (Oryza sativa subsp. indica (Rice)).